The primary structure comprises 240 residues: Ribonuclease P protein component (240 aa).

The disordered stretch occupies residues 1–140; that stretch reads MDEKDLATQQ…KKAGGKGLVS (140 aa). The segment covering 40–51 has biased composition (pro residues); it reads APPPHRVIPPHP. The tract at residues 47 to 123 is insert; sequence IPPHPGLRQD…PGPDRDGGSK (77 aa). Residues 122–132 are compositionally biased toward low complexity; that stretch reads SKASRASSPKK.

It belongs to the RnpA family. In terms of assembly, consists of a catalytic RNA component (M1 or rnpB) and a protein subunit.

It catalyses the reaction Endonucleolytic cleavage of RNA, removing 5'-extranucleotides from tRNA precursor.. Functionally, RNaseP catalyzes the removal of the 5'-leader sequence from pre-tRNA to produce the mature 5'-terminus. It can also cleave other RNA substrates such as 4.5S RNA. The protein component plays an auxiliary but essential role in vivo by binding to the 5'-leader sequence and broadening the substrate specificity of the ribozyme. This chain is Ribonuclease P protein component, found in Thermus filiformis.